A 492-amino-acid chain; its full sequence is 3-octaprenyl-4-hydroxybenzoate carboxy-lyase (492 aa).

Asn-172 is a Mn(2+) binding site. Residues 175 to 177, 189 to 191, and 194 to 195 each bind prenylated FMN; these read IYR, RWL, and RG. Glu-238 lines the Mn(2+) pocket. The Proton donor role is filled by Asp-287.

The protein belongs to the UbiD family. As to quaternary structure, homohexamer. It depends on prenylated FMN as a cofactor. Requires Mn(2+) as cofactor.

It is found in the cell membrane. The enzyme catalyses a 4-hydroxy-3-(all-trans-polyprenyl)benzoate + H(+) = a 2-(all-trans-polyprenyl)phenol + CO2. It participates in cofactor biosynthesis; ubiquinone biosynthesis. In terms of biological role, catalyzes the decarboxylation of 3-octaprenyl-4-hydroxy benzoate to 2-octaprenylphenol, an intermediate step in ubiquinone biosynthesis. This chain is 3-octaprenyl-4-hydroxybenzoate carboxy-lyase, found in Pasteurella multocida (strain Pm70).